A 140-amino-acid chain; its full sequence is uncharacterized protein (140 aa).

To B.subtilis YrhD.

This is an uncharacterized protein from Archaeoglobus fulgidus (strain ATCC 49558 / DSM 4304 / JCM 9628 / NBRC 100126 / VC-16).